We begin with the raw amino-acid sequence, 141 residues long: Hemoglobin subunit alpha-2 (141 aa).

One can recognise a Globin domain in the interval 1 to 141; it reads VLSSQDKANV…VKHVLTSKYR (141 aa). Position 58 (histidine 58) interacts with O2. Position 87 (histidine 87) interacts with heme b.

The protein belongs to the globin family. In terms of assembly, minor hemoglobin is a heterotetramer of two alpha-2 chains and two beta-2 chains. As to expression, red blood cells.

Functionally, involved in oxygen transport from the lung to the various peripheral tissues. This Triturus cristatus (Great crested newt) protein is Hemoglobin subunit alpha-2.